The following is a 910-amino-acid chain: Protein translocase subunit SecA (910 aa).

ATP-binding positions include Gln-87, 105–109 (GEGKT), and Asp-508. The span at 558–568 (RHESRRIDNQL) shows a compositional bias: basic and acidic residues. Disordered regions lie at residues 558 to 580 (RHES…DPGS) and 873 to 910 (AAQQ…GQLS). Zn(2+) contacts are provided by Cys-894, Cys-896, Cys-905, and His-906. A compositionally biased stretch (basic residues) spans 900–910 (KKYKHCHGQLS).

The protein belongs to the SecA family. In terms of assembly, monomer and homodimer. Part of the essential Sec protein translocation apparatus which comprises SecA, SecYEG and auxiliary proteins SecDF-YajC and YidC. Requires Zn(2+) as cofactor.

The protein resides in the cell inner membrane. It localises to the cytoplasm. The catalysed reaction is ATP + H2O + cellular proteinSide 1 = ADP + phosphate + cellular proteinSide 2.. Functionally, part of the Sec protein translocase complex. Interacts with the SecYEG preprotein conducting channel. Has a central role in coupling the hydrolysis of ATP to the transfer of proteins into and across the cell membrane, serving both as a receptor for the preprotein-SecB complex and as an ATP-driven molecular motor driving the stepwise translocation of polypeptide chains across the membrane. The polypeptide is Protein translocase subunit SecA (Stenotrophomonas maltophilia (strain R551-3)).